The chain runs to 110 residues: Iron-sulfur cluster assembly protein CyaY (110 aa).

The protein belongs to the frataxin family.

Its function is as follows. Involved in iron-sulfur (Fe-S) cluster assembly. May act as a regulator of Fe-S biogenesis. This chain is Iron-sulfur cluster assembly protein CyaY, found in Paracidovorax citrulli (strain AAC00-1) (Acidovorax citrulli).